The primary structure comprises 188 residues: UPF0488 protein C8orf33 homolog (188 aa).

Disordered stretches follow at residues Met-1 to Gln-65, Gln-87 to Pro-112, and Ala-144 to Glu-182. Ala-2 bears the N-acetylalanine mark. Ser-41 is subject to Phosphoserine. Positions Pro-166 to Glu-182 are enriched in basic and acidic residues.

Belongs to the UPF0488 family.

This is UPF0488 protein C8orf33 homolog from Bos taurus (Bovine).